The chain runs to 601 residues: NADH-quinone oxidoreductase subunit C/D (601 aa).

Residues 1-191 (MKLTRDFPHN…DPFMLDAAKQ (191 aa)) are NADH dehydrogenase I subunit C. An NADH dehydrogenase I subunit D region spans residues 215-601 (DYMFLNLGPN…IDFVMSDVDR (387 aa)).

The protein in the N-terminal section; belongs to the complex I 30 kDa subunit family. This sequence in the C-terminal section; belongs to the complex I 49 kDa subunit family. In terms of assembly, NDH-1 is composed of 13 different subunits. Subunits NuoB, CD, E, F, and G constitute the peripheral sector of the complex.

It is found in the cell inner membrane. It carries out the reaction a quinone + NADH + 5 H(+)(in) = a quinol + NAD(+) + 4 H(+)(out). In terms of biological role, NDH-1 shuttles electrons from NADH, via FMN and iron-sulfur (Fe-S) centers, to quinones in the respiratory chain. The immediate electron acceptor for the enzyme in this species is believed to be ubiquinone. Couples the redox reaction to proton translocation (for every two electrons transferred, four hydrogen ions are translocated across the cytoplasmic membrane), and thus conserves the redox energy in a proton gradient. The sequence is that of NADH-quinone oxidoreductase subunit C/D from Shewanella oneidensis (strain ATCC 700550 / JCM 31522 / CIP 106686 / LMG 19005 / NCIMB 14063 / MR-1).